Here is a 290-residue protein sequence, read N- to C-terminus: Ciliary microtubule inner protein 6 (290 aa).

Residues 76–112 (ENQGDWWPHGKGLENPFQPPYDTKSTQRSDFKKPTCP) form a disordered region. Mn stretches follow at residues 128–160 (GIVP…ARKT) and 213–246 (SAES…IRVA). Residues 197–228 (SGSCSSEQSKKTEKGNSAESKMISPGLCRQNS) form a disordered region.

The protein localises to the cell projection. It localises to the cilium. This chain is Ciliary microtubule inner protein 6 (CIMIP6), found in Bos taurus (Bovine).